Here is a 950-residue protein sequence, read N- to C-terminus: uncharacterized protein (950 aa).

This is an uncharacterized protein from Rickettsia prowazekii (strain Madrid E).